The primary structure comprises 255 residues: Chlorocatechol 1,2-dioxygenase (255 aa).

Fe cation contacts are provided by Y130, Y164, H188, and H190.

Belongs to the intradiol ring-cleavage dioxygenase family. Fe(3+) serves as cofactor.

It catalyses the reaction 3,5-dichlorocatechol + O2 = (2E,4E)-2,4-dichloromuconate + 2 H(+). Its pathway is aromatic compound metabolism; 3-chlorocatechol degradation. Functionally, preferentially converts 3,5-dichlorocatechol as opposed to other chlorinated catechols. Retains diminished activity toward non-chlorinated substrates. The protein is Chlorocatechol 1,2-dioxygenase (tfdC) of Burkholderia cepacia (Pseudomonas cepacia).